The sequence spans 183 residues: NAD(P)H-quinone oxidoreductase subunit I, chloroplastic (183 aa).

4Fe-4S ferredoxin-type domains are found at residues 55–84 (GRIH…VDWK) and 95–124 (KSYS…MTEE). 8 residues coordinate [4Fe-4S] cluster: Cys64, Cys67, Cys70, Cys74, Cys104, Cys107, Cys110, and Cys114.

Belongs to the complex I 23 kDa subunit family. NDH is composed of at least 16 different subunits, 5 of which are encoded in the nucleus. [4Fe-4S] cluster is required as a cofactor.

The protein resides in the plastid. It localises to the chloroplast thylakoid membrane. The catalysed reaction is a plastoquinone + NADH + (n+1) H(+)(in) = a plastoquinol + NAD(+) + n H(+)(out). The enzyme catalyses a plastoquinone + NADPH + (n+1) H(+)(in) = a plastoquinol + NADP(+) + n H(+)(out). In terms of biological role, NDH shuttles electrons from NAD(P)H:plastoquinone, via FMN and iron-sulfur (Fe-S) centers, to quinones in the photosynthetic chain and possibly in a chloroplast respiratory chain. The immediate electron acceptor for the enzyme in this species is believed to be plastoquinone. Couples the redox reaction to proton translocation, and thus conserves the redox energy in a proton gradient. In Anthoceros angustus (Hornwort), this protein is NAD(P)H-quinone oxidoreductase subunit I, chloroplastic.